We begin with the raw amino-acid sequence, 100 residues long: Urease subunit gamma (100 aa).

It belongs to the urease gamma subunit family. Heterotrimer of UreA (gamma), UreB (beta) and UreC (alpha) subunits. Three heterotrimers associate to form the active enzyme.

Its subcellular location is the cytoplasm. It carries out the reaction urea + 2 H2O + H(+) = hydrogencarbonate + 2 NH4(+). It functions in the pathway nitrogen metabolism; urea degradation; CO(2) and NH(3) from urea (urease route): step 1/1. The sequence is that of Urease subunit gamma from Magnetococcus marinus (strain ATCC BAA-1437 / JCM 17883 / MC-1).